The chain runs to 230 residues: Protein GrpE (230 aa).

Disordered stretches follow at residues 1–28 (MADE…EALK) and 209–230 (GVSK…EDNA). Residues 221-230 (NGASTSEDNA) are compositionally biased toward polar residues.

This sequence belongs to the GrpE family. Homodimer.

The protein localises to the cytoplasm. In terms of biological role, participates actively in the response to hyperosmotic and heat shock by preventing the aggregation of stress-denatured proteins, in association with DnaK and GrpE. It is the nucleotide exchange factor for DnaK and may function as a thermosensor. Unfolded proteins bind initially to DnaJ; upon interaction with the DnaJ-bound protein, DnaK hydrolyzes its bound ATP, resulting in the formation of a stable complex. GrpE releases ADP from DnaK; ATP binding to DnaK triggers the release of the substrate protein, thus completing the reaction cycle. Several rounds of ATP-dependent interactions between DnaJ, DnaK and GrpE are required for fully efficient folding. This is Protein GrpE from Brucella ovis (strain ATCC 25840 / 63/290 / NCTC 10512).